Consider the following 110-residue polypeptide: Period circadian protein (110 aa).

Residues 23 to 97 form a disordered region; sequence VTNTSIAGTG…GGAGGGGGVT (75 aa). 12 repeat units span residues 30-31, 33-34, 36-37, 38-39, 40-41, 42-43, 44-45, 46-47, 48-49, 50-51, 52-53, and 54-55. A compositionally biased stretch (gly residues) spans 30 to 63; that stretch reads GTGGTGGTGTGTGTGTGTGTGTGTGTDTGTGTGT. The segment at 30-79 is 24 X 2 AA approximate tandem repeats of G-T; that stretch reads GTGGTGGTGTGTGTGTGTGTGTGTGTDTGTGTGTRNGTNSGTNSGTRTGT. The 13; approximate repeat unit spans residues 56–57; that stretch reads DT. Repeat copies occupy residues 58–59, 60–61, and 62–63. Residues 64-65 form a 17; approximate repeat; it reads RN. Residues 64 to 83 show a composition bias toward low complexity; it reads RNGTNSGTNSGTRTGTASSY. Repeat 18 spans residues 66 to 67; the sequence is GT. A 19; approximate repeat occupies 68-69; the sequence is NS. The stretch at 70–71 is repeat 20; it reads GT. The stretch at 72–73 is one 21; approximate repeat; sequence NS. Copy 22 of the repeat occupies 74–75; the sequence is GT. A 23; approximate repeat occupies 76–77; that stretch reads RT. The stretch at 78–79 is repeat 24; it reads GT. Gly residues predominate over residues 84 to 96; it reads RGGGGGAGGGGGV.

In terms of assembly, forms a heterodimer with timeless (TIM); the complex then translocates into the nucleus. Post-translationally, phosphorylated with a circadian rhythmicity, probably by the double-time protein (dbt). Phosphorylation could be implicated in the stability of per monomer and in the formation of heterodimer per-tim.

The protein resides in the nucleus. The protein localises to the cytoplasm. Its subcellular location is the perinuclear region. Functionally, essential for biological clock functions. Determines the period length of circadian and ultradian rhythms; an increase in PER dosage leads to shortened circadian rhythms and a decrease leads to lengthened circadian rhythms. Essential for the circadian rhythmicity of locomotor activity, eclosion behavior, and for the rhythmic component of the male courtship song that originates in the thoracic nervous system. The biological cycle depends on the rhythmic formation and nuclear localization of the TIM-PER complex. Light induces the degradation of TIM, which promotes elimination of PER. Nuclear activity of the heterodimer coordinatively regulates PER and TIM transcription through a negative feedback loop. Behaves as a negative element in circadian transcriptional loop. Does not appear to bind DNA, suggesting indirect transcriptional inhibition. The protein is Period circadian protein (per) of Drosophila erecta (Fruit fly).